A 247-amino-acid chain; its full sequence is E3 SUMO-protein ligase NSE2 (247 aa).

Met-1 carries the post-translational modification N-acetylmethionine. Glycyl lysine isopeptide (Lys-Gly) (interchain with G-Cter in SUMO2) cross-links involve residues Lys-90 and Lys-107. At Ser-116 the chain carries Phosphoserine. Residues Lys-125 and Lys-130 each participate in a glycyl lysine isopeptide (Lys-Gly) (interchain with G-Cter in SUMO2) cross-link. The segment at 154–240 adopts an SP-RING-type zinc-finger fold; the sequence is MDEDMIVTQS…LRRAIESHNK (87 aa). Cys-185, His-187, Cys-210, and Cys-215 together coordinate Zn(2+).

The protein belongs to the NSE2 family. As to quaternary structure, component of the SMC5-SMC6 complex which consists at least of SMC5, SMC6, NSMCE2, NSMCE1, NSMCE4A or EID3 and NSMCE3. Sumoylated, possibly via autosumoylation.

The protein resides in the nucleus. The protein localises to the chromosome. It localises to the telomere. It is found in the PML body. The protein operates within protein modification; protein sumoylation. Functionally, E3 SUMO-protein ligase component of the SMC5-SMC6 complex, a complex involved in DNA double-strand break repair by homologous recombination. Is not be required for the stability of the complex. The complex may promote sister chromatid homologous recombination by recruiting the SMC1-SMC3 cohesin complex to double-strand breaks. Acts as an E3 ligase mediating SUMO attachment to various proteins such as SMC6L1 and TSNAX, the shelterin complex subunits TERF1, TERF2, TINF2 and TERF2IP, RAD51AP1, and maybe the cohesin components RAD21 and STAG2. Required for recruitment of telomeres to PML nuclear bodies. Required for sister chromatid cohesion during prometaphase and mitotic progression. The chain is E3 SUMO-protein ligase NSE2 (Nsmce2) from Rattus norvegicus (Rat).